The following is a 545-amino-acid chain: Chaperonin GroEL (545 aa).

ATP contacts are provided by residues threonine 30–proline 33, lysine 51, aspartate 87–threonine 91, glycine 415, asparagine 479–alanine 481, and aspartate 495.

It belongs to the chaperonin (HSP60) family. As to quaternary structure, forms a cylinder of 14 subunits composed of two heptameric rings stacked back-to-back. Interacts with the co-chaperonin GroES.

The protein resides in the cytoplasm. The enzyme catalyses ATP + H2O + a folded polypeptide = ADP + phosphate + an unfolded polypeptide.. Together with its co-chaperonin GroES, plays an essential role in assisting protein folding. The GroEL-GroES system forms a nano-cage that allows encapsulation of the non-native substrate proteins and provides a physical environment optimized to promote and accelerate protein folding. The polypeptide is Chaperonin GroEL (Tolumonas auensis (strain DSM 9187 / NBRC 110442 / TA 4)).